The primary structure comprises 210 residues: MGVRAQQKEKTRRSLVEAAFSQLSAERSFASLSLREVAREAGIAPTSFYRHFRDVDELGLTMVDESGLMLRQLMRQARQRIAKGGSVIRTSVSTFMEFIGNNPNAFRLLLRERSGTSAAFRAAVAREIQHFIAELADYLELENHMPRAFTEAQAEAMVTIVFSAGAEALDIGAEQRRQLEERLVLQLRMIAKGAYYWYRREQEKIAQHSE.

One can recognise an HTH tetR-type domain in the interval Lys-10–Leu-70. Residues Ser-33–Phe-52 constitute a DNA-binding region (H-T-H motif).

Homodimer.

It is found in the cytoplasm. Represses the transcription of fabB, involved in unsaturated fatty acid (UFA) biosynthesis. By controlling UFA production, FabR directly influences the physical properties of the membrane bilayer. In Salmonella paratyphi A (strain ATCC 9150 / SARB42), this protein is HTH-type transcriptional repressor FabR.